We begin with the raw amino-acid sequence, 152 residues long: RDDFSSDDMKSDDESSQKEMKSSRGRTSSINEDEDLNPEQKVEREKERRMANNARERLRVRDINEAFKELGRMCQLHLKSEKPQTKLLILHQAVAVILNLEQQVRERNLNPKAACLKRREEEKVSAVSAEPPNTHPGVHPGLTDTTNPMGHM.

Disordered regions lie at residues 1 to 54 and 123 to 152; these read RDDF…ANNA and KVSAVSAEPPNTHPGVHPGLTDTTNPMGHM. 2 stretches are compositionally biased toward basic and acidic residues: residues 7–22 and 38–54; these read DDMKSDDESSQKEMKS and PEQKVEREKERRMANNA. Residues 47–100 enclose the bHLH domain; the sequence is ERRMANNARERLRVRDINEAFKELGRMCQLHLKSEKPQTKLLILHQAVAVILNL. Residues 102–125 form a class A specific domain region; sequence QQVRERNLNPKAACLKRREEEKVS. Residues 143-152 are compositionally biased toward polar residues; it reads TDTTNPMGHM.

Efficient DNA binding requires dimerization with another bHLH protein. Forms homo- or heterooligomers with myogenin, E12 and ITF2 proteins.

Its subcellular location is the nucleus. Its function is as follows. Transcriptional regulator. Involved in the initiation of neuronal differentiation. Activates transcription by binding to the E box-containing promoter. This chain is Transcription factor XE1.1, found in Xenopus laevis (African clawed frog).